The chain runs to 543 residues: Chaperonin GroEL 4 (543 aa).

Residues 29–32 (TLGP), 86–90 (DGTTT), G411, 476–478 (DAA), and D492 contribute to the ATP site.

This sequence belongs to the chaperonin (HSP60) family. As to quaternary structure, forms a cylinder of 14 subunits composed of two heptameric rings stacked back-to-back. Interacts with the co-chaperonin GroES.

The protein localises to the cytoplasm. It carries out the reaction ATP + H2O + a folded polypeptide = ADP + phosphate + an unfolded polypeptide.. Functionally, together with its co-chaperonin GroES, plays an essential role in assisting protein folding. The GroEL-GroES system forms a nano-cage that allows encapsulation of the non-native substrate proteins and provides a physical environment optimized to promote and accelerate protein folding. The polypeptide is Chaperonin GroEL 4 (Bradyrhizobium diazoefficiens (strain JCM 10833 / BCRC 13528 / IAM 13628 / NBRC 14792 / USDA 110)).